Here is a 235-residue protein sequence, read N- to C-terminus: Aspartate/glutamate leucyltransferase (235 aa).

This sequence belongs to the R-transferase family. Bpt subfamily.

The protein localises to the cytoplasm. The catalysed reaction is N-terminal L-glutamyl-[protein] + L-leucyl-tRNA(Leu) = N-terminal L-leucyl-L-glutamyl-[protein] + tRNA(Leu) + H(+). It catalyses the reaction N-terminal L-aspartyl-[protein] + L-leucyl-tRNA(Leu) = N-terminal L-leucyl-L-aspartyl-[protein] + tRNA(Leu) + H(+). In terms of biological role, functions in the N-end rule pathway of protein degradation where it conjugates Leu from its aminoacyl-tRNA to the N-termini of proteins containing an N-terminal aspartate or glutamate. This chain is Aspartate/glutamate leucyltransferase, found in Pseudomonas syringae pv. tomato (strain ATCC BAA-871 / DC3000).